We begin with the raw amino-acid sequence, 638 residues long: 1-deoxy-D-xylulose-5-phosphate synthase (638 aa).

Residues histidine 76 and 117 to 119 (AHS) contribute to the thiamine diphosphate site. Aspartate 148 is a binding site for Mg(2+). Residues 149–150 (GS), asparagine 177, tyrosine 287, and glutamate 369 contribute to the thiamine diphosphate site. Asparagine 177 is a Mg(2+) binding site.

Belongs to the transketolase family. DXPS subfamily. As to quaternary structure, homodimer. It depends on Mg(2+) as a cofactor. The cofactor is thiamine diphosphate.

The enzyme catalyses D-glyceraldehyde 3-phosphate + pyruvate + H(+) = 1-deoxy-D-xylulose 5-phosphate + CO2. It participates in metabolic intermediate biosynthesis; 1-deoxy-D-xylulose 5-phosphate biosynthesis; 1-deoxy-D-xylulose 5-phosphate from D-glyceraldehyde 3-phosphate and pyruvate: step 1/1. In terms of biological role, catalyzes the acyloin condensation reaction between C atoms 2 and 3 of pyruvate and glyceraldehyde 3-phosphate to yield 1-deoxy-D-xylulose-5-phosphate (DXP). The polypeptide is 1-deoxy-D-xylulose-5-phosphate synthase (Rhodopseudomonas palustris (strain HaA2)).